The sequence spans 229 residues: Large ribosomal subunit protein bL25 (229 aa).

2 disordered regions span residues 1 to 21 (MDII…ASSR) and 182 to 229 (NAPE…KDKK). Residues 195–222 (PAAGAPAAGAAAAPAAGAAAPAKGAAPA) are compositionally biased toward low complexity.

It belongs to the bacterial ribosomal protein bL25 family. CTC subfamily. In terms of assembly, part of the 50S ribosomal subunit; part of the 5S rRNA/L5/L18/L25 subcomplex. Contacts the 5S rRNA. Binds to the 5S rRNA independently of L5 and L18.

This is one of the proteins that binds to the 5S RNA in the ribosome where it forms part of the central protuberance. The sequence is that of Large ribosomal subunit protein bL25 from Sorangium cellulosum (strain So ce56) (Polyangium cellulosum (strain So ce56)).